The primary structure comprises 427 residues: Enolase (427 aa).

Residue Q163 coordinates (2R)-2-phosphoglycerate. E205 serves as the catalytic Proton donor. Positions 242, 285, and 312 each coordinate Mg(2+). (2R)-2-phosphoglycerate contacts are provided by K337, R366, S367, and K388. Residue K337 is the Proton acceptor of the active site.

It belongs to the enolase family. Mg(2+) is required as a cofactor.

The protein resides in the cytoplasm. Its subcellular location is the secreted. The protein localises to the cell surface. The enzyme catalyses (2R)-2-phosphoglycerate = phosphoenolpyruvate + H2O. Its pathway is carbohydrate degradation; glycolysis; pyruvate from D-glyceraldehyde 3-phosphate: step 4/5. Its function is as follows. Catalyzes the reversible conversion of 2-phosphoglycerate (2-PG) into phosphoenolpyruvate (PEP). It is essential for the degradation of carbohydrates via glycolysis. This chain is Enolase, found in Burkholderia vietnamiensis (strain G4 / LMG 22486) (Burkholderia cepacia (strain R1808)).